A 63-amino-acid polypeptide reads, in one-letter code: Muscarinic toxin 2 (63 aa).

Cystine bridges form between C3/C22, C17/C42, C44/C55, and C56/C61.

Belongs to the three-finger toxin family. Short-chain subfamily. Type B muscarinic toxin sub-subfamily. In terms of assembly, monomer. In terms of tissue distribution, expressed by the venom gland.

The protein localises to the secreted. Its function is as follows. Blocks M2 muscarinic acetylcholine receptors (CHRM2). Fully blocks the binding of N-methylscopolamine (NMS) and oxotremorine-M to M2 receptors, slightly increased NMS binding to M1 receptors. In Dendroaspis angusticeps (Eastern green mamba), this protein is Muscarinic toxin 2.